The following is a 618-amino-acid chain: Proline--tRNA ligase (618 aa).

This sequence belongs to the class-II aminoacyl-tRNA synthetase family. ProS type 1 subfamily. In terms of assembly, homodimer.

It localises to the cytoplasm. It catalyses the reaction tRNA(Pro) + L-proline + ATP = L-prolyl-tRNA(Pro) + AMP + diphosphate. Its function is as follows. Catalyzes the attachment of proline to tRNA(Pro) in a two-step reaction: proline is first activated by ATP to form Pro-AMP and then transferred to the acceptor end of tRNA(Pro). As ProRS can inadvertently accommodate and process non-cognate amino acids such as alanine and cysteine, to avoid such errors it has two additional distinct editing activities against alanine. One activity is designated as 'pretransfer' editing and involves the tRNA(Pro)-independent hydrolysis of activated Ala-AMP. The other activity is designated 'posttransfer' editing and involves deacylation of mischarged Ala-tRNA(Pro). The misacylated Cys-tRNA(Pro) is not edited by ProRS. The sequence is that of Proline--tRNA ligase from Streptococcus pyogenes serotype M1.